Reading from the N-terminus, the 602-residue chain is Elongation factor 4 (602 aa).

The 183-residue stretch at 7 to 189 folds into the tr-type G domain; it reads KYIRNFSIVA…AIVNKVPAPE (183 aa). GTP-binding positions include 19 to 24 and 136 to 139; these read DHGKST and NKID.

This sequence belongs to the TRAFAC class translation factor GTPase superfamily. Classic translation factor GTPase family. LepA subfamily.

It localises to the cell membrane. The catalysed reaction is GTP + H2O = GDP + phosphate + H(+). Required for accurate and efficient protein synthesis under certain stress conditions. May act as a fidelity factor of the translation reaction, by catalyzing a one-codon backward translocation of tRNAs on improperly translocated ribosomes. Back-translocation proceeds from a post-translocation (POST) complex to a pre-translocation (PRE) complex, thus giving elongation factor G a second chance to translocate the tRNAs correctly. Binds to ribosomes in a GTP-dependent manner. The polypeptide is Elongation factor 4 (Clostridium botulinum (strain Okra / Type B1)).